A 472-amino-acid chain; its full sequence is Carboxypeptidase Q (472 aa).

A signal peptide spans 1-20 (MKFLIFAFFGGVHLLSLCSG). Residues 21–44 (KAIYKNGISKRTFEEIKEEIASYG) constitute a propeptide that is removed on maturation. N-linked (GlcNAc...) asparagine glycans are attached at residues N61 and N179. Zn(2+) is bound by residues H290 and D302. E336 acts as the Nucleophile in catalysis. E337 is a Zn(2+) binding site. N353 and N356 each carry an N-linked (GlcNAc...) asparagine glycan. D364 contributes to the Zn(2+) binding site. N-linked (GlcNAc...) asparagine glycosylation occurs at N396. H434 lines the Zn(2+) pocket.

It belongs to the peptidase M28 family. As to quaternary structure, homodimer. The monomeric form is inactive while the homodimer is active. In terms of processing, N-glycosylated. The secreted form is modified by hybrid or complex type oligosaccharide chains.

The protein localises to the endoplasmic reticulum. The protein resides in the golgi apparatus. It is found in the lysosome. It localises to the secreted. Carboxypeptidase that may play an important role in the hydrolysis of circulating peptides. Catalyzes the hydrolysis of dipeptides with unsubstituted terminals into amino acids. May play a role in the liberation of thyroxine hormone from its thyroglobulin (Tg) precursor. The chain is Carboxypeptidase Q (CPQ) from Pongo abelii (Sumatran orangutan).